The following is a 217-amino-acid chain: Non-structural protein NS3 (217 aa).

This sequence belongs to the orbivirus NS3 family.

Functionally, may play a role in the release of virions from infected cells. This African horse sickness virus 6 (AHSV-6) protein is Non-structural protein NS3 (Segment-10).